Reading from the N-terminus, the 286-residue chain is CDP-diacylglycerol--serine O-phosphatidyltransferase (286 aa).

Helical transmembrane passes span 15-35 (ILPS…IKFA), 74-94 (IDSL…LYVS), 95-115 (MLSK…CVVL), 135-155 (EFFV…LLAL), 167-187 (GWFL…GIPM), and 207-227 (LAIC…VIII).

This sequence belongs to the CDP-alcohol phosphatidyltransferase class-I family.

The protein localises to the cell membrane. The enzyme catalyses a CDP-1,2-diacyl-sn-glycerol + L-serine = a 1,2-diacyl-sn-glycero-3-phospho-L-serine + CMP + H(+). This chain is CDP-diacylglycerol--serine O-phosphatidyltransferase (pssA), found in Mycobacterium tuberculosis (strain ATCC 25618 / H37Rv).